Reading from the N-terminus, the 424-residue chain is Histidine--tRNA ligase (424 aa).

Belongs to the class-II aminoacyl-tRNA synthetase family. As to quaternary structure, homodimer.

Its subcellular location is the cytoplasm. It carries out the reaction tRNA(His) + L-histidine + ATP = L-histidyl-tRNA(His) + AMP + diphosphate + H(+). The protein is Histidine--tRNA ligase of Bacillus licheniformis (strain ATCC 14580 / DSM 13 / JCM 2505 / CCUG 7422 / NBRC 12200 / NCIMB 9375 / NCTC 10341 / NRRL NRS-1264 / Gibson 46).